The sequence spans 545 residues: Chaperonin GroEL (545 aa).

Residues 30–33 (TLGP), K51, 87–91 (DGTTT), G415, and D496 each bind ATP.

It belongs to the chaperonin (HSP60) family. As to quaternary structure, forms a cylinder of 14 subunits composed of two heptameric rings stacked back-to-back. Interacts with the co-chaperonin GroES.

It localises to the cytoplasm. The catalysed reaction is ATP + H2O + a folded polypeptide = ADP + phosphate + an unfolded polypeptide.. Functionally, together with its co-chaperonin GroES, plays an essential role in assisting protein folding. The GroEL-GroES system forms a nano-cage that allows encapsulation of the non-native substrate proteins and provides a physical environment optimized to promote and accelerate protein folding. This chain is Chaperonin GroEL, found in Chlorobaculum tepidum (strain ATCC 49652 / DSM 12025 / NBRC 103806 / TLS) (Chlorobium tepidum).